Consider the following 482-residue polypeptide: Scarecrow-like protein 3 (482 aa).

Residues 45–479 (LKPEERGLYL…RPLYSVSAWR (435 aa)) form the GRAS domain. The segment at 52–115 (LYLIHLLLTC…ILKSWPGLYK (64 aa)) is leucine repeat I (LRI). The segment at 134 to 199 (RRLFFEMFPI…EGPPHLRITG (66 aa)) is VHIID. The short motif at 165–169 (VHVID) is the VHIID element. Positions 209–241 (QMAHRLIEEAEKLDIPFQFNPVVSRLDCLNVEQ) are leucine repeat II (LRII). The tract at residues 250–401 (LAVSSVLQLH…KMLFGEEIKN (152 aa)) is PFYRE. The disordered stretch occupies residues 302-324 (ENDMSNNNGYSPSGDSASSLPLP). Polar residues predominate over residues 305–324 (MSNNNGYSPSGDSASSLPLP). The interval 404–479 (SCEGFERRER…RPLYSVSAWR (76 aa)) is SAW.

Belongs to the GRAS family. In terms of assembly, binds to zinc finger proteins MGP/IDD3, IDD4, IDD5, BIB/IDD9 and JKD/IDD10. As to expression, expressed in seedlings, root epidermis, leaves, flowers and siliques.

Its subcellular location is the nucleus. Probable transcription factor involved in plant development. The protein is Scarecrow-like protein 3 of Arabidopsis thaliana (Mouse-ear cress).